A 125-amino-acid chain; its full sequence is MDELELRIRKAEKLVQDAKKEFEMGLYERCCSTAYYAMFHAAKAMLLGYGRDSKTHRGTIYLIWECREELGLSDDDCSKLSRAFDLREESDYGIYKEVSKDLAIKILKDAEIFVQKAKNAVNKNR.

The protein belongs to the UPF0332 family.

The protein is UPF0332 protein AF_0298 of Archaeoglobus fulgidus (strain ATCC 49558 / DSM 4304 / JCM 9628 / NBRC 100126 / VC-16).